We begin with the raw amino-acid sequence, 244 residues long: UPF0173 metal-dependent hydrolase RoseRS_3945 (244 aa).

Belongs to the UPF0173 family.

The protein is UPF0173 metal-dependent hydrolase RoseRS_3945 of Roseiflexus sp. (strain RS-1).